The chain runs to 95 residues: Co-chaperonin GroES (95 aa).

Residues 12-22 (VKPSPAEEKTK) show a composition bias toward basic and acidic residues. The segment at 12–38 (VKPSPAEEKTKGGLYIPDSGKEKPQHG) is disordered.

This sequence belongs to the GroES chaperonin family. In terms of assembly, heptamer of 7 subunits arranged in a ring. Interacts with the chaperonin GroEL.

It localises to the cytoplasm. Together with the chaperonin GroEL, plays an essential role in assisting protein folding. The GroEL-GroES system forms a nano-cage that allows encapsulation of the non-native substrate proteins and provides a physical environment optimized to promote and accelerate protein folding. GroES binds to the apical surface of the GroEL ring, thereby capping the opening of the GroEL channel. The protein is Co-chaperonin GroES of Chloroherpeton thalassium (strain ATCC 35110 / GB-78).